A 238-amino-acid chain; its full sequence is NAD-dependent protein deacylase (238 aa).

One can recognise a Deacetylase sirtuin-type domain in the interval 1–237 (MRGIMKVFVL…PAWVERLLAR (237 aa)). Residue 12 to 31 (GAGVSAESGLGTFRDKDGVW) coordinates NAD(+). Residues Tyr56 and Arg59 each coordinate substrate. 94–97 (QNVD) provides a ligand contact to NAD(+). Residue His112 is the Proton acceptor of the active site. Cys120, Cys123, Cys139, and Cys142 together coordinate Zn(2+). Residues 179–181 (GTS), 205–207 (NLE), and Ala223 each bind NAD(+).

It belongs to the sirtuin family. Class III subfamily. Zn(2+) is required as a cofactor.

It is found in the cytoplasm. It carries out the reaction N(6)-acetyl-L-lysyl-[protein] + NAD(+) + H2O = 2''-O-acetyl-ADP-D-ribose + nicotinamide + L-lysyl-[protein]. The catalysed reaction is N(6)-succinyl-L-lysyl-[protein] + NAD(+) + H2O = 2''-O-succinyl-ADP-D-ribose + nicotinamide + L-lysyl-[protein]. Its function is as follows. NAD-dependent lysine deacetylase and desuccinylase that specifically removes acetyl and succinyl groups on target proteins. Modulates the activities of several proteins which are inactive in their acylated form. The polypeptide is NAD-dependent protein deacylase (Caulobacter vibrioides (strain ATCC 19089 / CIP 103742 / CB 15) (Caulobacter crescentus)).